Here is a 371-residue protein sequence, read N- to C-terminus: Neuropeptide S receptor (371 aa).

Positions 1-21 (MPANFTEGSFDSSGTGQTLDS) are enriched in polar residues. The disordered stretch occupies residues 1–22 (MPANFTEGSFDSSGTGQTLDSS). The Extracellular segment spans residues 1–52 (MPANFTEGSFDSSGTGQTLDSSPVACTETVTFTEVVEGKEWGSFYYSFKTEQ). N-linked (GlcNAc...) asparagine glycosylation is present at Asn-4. Residues 53 to 73 (LITLWVLFVFTIVGNSVVLFS) traverse the membrane as a helical segment. At 74 to 82 (TWRRKKKSR) the chain is on the cytoplasmic side. Residues 83 to 103 (MTFFVTQLAITDSFTGLVNIL) form a helical membrane-spanning segment. The Extracellular segment spans residues 104–123 (TDINWRFTGDFTAPDLVCRV). Residues Cys-121 and Cys-197 are joined by a disulfide bond. A helical transmembrane segment spans residues 124-144 (VRYLQVVLLYASTYVLVSLSI). The Cytoplasmic segment spans residues 145–164 (DRYHAIVYPMKFLQGEKQAR). The chain crosses the membrane as a helical span at residues 165 to 185 (VLIVIAWSLSFLFSIPTLIIF). The Extracellular portion of the chain corresponds to 186–212 (GKRTLSNGEVQCWALWPDDSYWTPYMT). A helical transmembrane segment spans residues 213-233 (IVAFLVYFIPLTIISIMYGIV). At 234–275 (IRTIWIKSKTYETVISNCSDGKLCSSYNRGLISKAKIKAIKY) the chain is on the cytoplasmic side. The helical transmembrane segment at 276 to 296 (SIIIILAFICCWSPYFLFDIL) threads the bilayer. The Extracellular segment spans residues 297–312 (DNFNLLPDTQERFYAS). Residues 313 to 333 (VIIQNLPALNSAINPLIYCVF) form a helical membrane-spanning segment. Topologically, residues 334–371 (SSSISFPCREQRSQDSRMTFRERTERHEMQILSKPEFI) are cytoplasmic.

The protein belongs to the G-protein coupled receptor 1 family. Vasopressin/oxytocin receptor subfamily. In terms of tissue distribution, isoform 4 is ubiquitous; it is detected in glandular epithelia of bronchus, stomach, small intestine, colon, uterus, esophagus, spleen, kidney, pancreas, prostate and breast. Isoform 1 is detected in uterus, colon and prostate, and in the smooth muscle cell layer in bronchial and arterial walls (at protein level). Isoform 1 is predominantly expressed in smooth muscle. Isoform 4 is predominantly expressed in epithelial cells. In bronchial biopsies, it is expressed in smooth muscle cells of asthma patients, but not in control patients; whereas in epithelial cells, its expression is consistently stronger in asthma patients.

It localises to the cell membrane. Its subcellular location is the cytoplasm. Functionally, G-protein coupled receptor for neuropeptide S (NPS). Promotes mobilization of intracellular Ca(2+) stores. Inhibits cell growth in response to NPS binding. Involved in pathogenesis of asthma and other IgE-mediated diseases. The chain is Neuropeptide S receptor (NPSR1) from Homo sapiens (Human).